Here is a 634-residue protein sequence, read N- to C-terminus: Ras and EF-hand domain-containing protein homolog (634 aa).

EF-hand domains follow at residues 5–33 (EVENLFSLCDSESKGYLTMEDLRKVCPQL) and 33–68 (LDDNDLRFIFTELDQDGSGKIEKLEFLRGFQDTVQH). Residues aspartate 46, aspartate 48, serine 50, lysine 52, and glutamate 57 each contribute to the Ca(2+) site. Positions 169–310 (LSEKKHENER…RCEFDQKQDE (142 aa)) form a coiled coil. The tract at residues 212 to 234 (ARQEERDRLTKEKEEMRQRMSDE) is disordered. Residues 449-454 (AVGKSS), 552-555 (NKVD), and 585-586 (AL) contribute to the GTP site. The propeptide at 632–634 (RGS) is removed in mature form.

Belongs to the small GTPase superfamily. Rab family. Homodimer.

It is found in the cytoplasm. It localises to the perinuclear region. Its function is as follows. Binds GTP and GDP. Plays a role in uterine seam cell development. The sequence is that of Ras and EF-hand domain-containing protein homolog from Caenorhabditis elegans.